The chain runs to 1237 residues: Glutamate receptor ionotropic, NMDA 2C (1237 aa).

Residues 1-19 form the signal peptide; the sequence is MGGALGPALLLTSLLGAWA. Residues 20-554 are Extracellular-facing; the sequence is RLGAGQGEQA…SAFLEPYSPA (535 aa). N70 and N73 each carry an N-linked (GlcNAc...) asparagine glycan. C82 and C317 are joined by a disulfide. 2 N-linked (GlcNAc...) asparagine glycosylation sites follow: N337 and N438. 2 cysteine pairs are disulfide-bonded: C426–C453 and C433–C454. Residues S509, T511, and R516 each contribute to the L-glutamate site. N-linked (GlcNAc...) asparagine glycosylation occurs at N539. A helical transmembrane segment spans residues 555–575; that stretch reads VWVMMFVMCLTVVAITVFMFE. Residues 576 to 601 lie on the Cytoplasmic side of the membrane; the sequence is YFSPVSYNQNLTKGKKPGGPSFTIGK. The pore-forming stretch occupies residues 601–620; that stretch reads KSVWLLWALVFNNSVPIENP. The discontinuously helical intramembrane region spans 602–611; sequence SVWLLWALVF. Topologically, residues 612–622 are cytoplasmic; it reads NNSVPIENPRG. A helical transmembrane segment spans residues 623–644; the sequence is TTSKIMVLVWAFFAVIFLASYT. Residues 645-813 lie on the Extracellular side of the membrane; the sequence is ANLAAFMIQE…EVMSSKLDID (169 aa). N-linked (GlcNAc...) asparagine glycosylation occurs at N685. Positions 687, 688, and 729 each coordinate L-glutamate. C743 and C798 are disulfide-bonded. Residues 814 to 833 traverse the membrane as a helical segment; the sequence is NMAGVFYMLLVAMGLALLVF. The Cytoplasmic segment spans residues 834-1237; the sequence is AWEHLVYWKL…RRVSSLESEV (404 aa). Residues S875, S881, and S912 each carry the phosphoserine modification. The span at 907-925 shows a compositional bias: polar residues; that stretch reads ADVSSSLDRATRTIENWGN. The tract at residues 907–990 is disordered; that stretch reads ADVSSSLDRA…LPDVSRPSCR (84 aa). The segment covering 930-941 has biased composition (low complexity); it reads PAPTASGPRSST. Pro residues predominate over residues 968–982; that stretch reads PQPPARPATCGPPLP. Positions 1235-1237 match the PDZ-binding motif; the sequence is SEV.

It belongs to the glutamate-gated ion channel (TC 1.A.10.1) family. NR2C/GRIN2C subfamily. Heterotetramer. Forms heterotetrameric channels composed of two GluN1/zeta subunits (GRIN1), and two identical GluN2/epsilon subunits (GRIN2A, GRIN2B, GRIN2C or GRIN2D) or GluN3 subunits (GRIN3A or GRIN3B) (in vitro). In vivo, the subunit composition may depend on the expression levels of the different subunits. Interacts with PDZ domains of PATJ and DLG4. Interacts (via PDZ-binding motif) with SNX27 (via PDZ domain); the interaction is required for recycling to the plasma membrane when endocytosed and prevent degradation in lysosomes. As to expression, detected in cerebellum.

The protein localises to the cell membrane. The protein resides in the postsynaptic cell membrane. It carries out the reaction Ca(2+)(in) = Ca(2+)(out). The enzyme catalyses Na(+)(in) = Na(+)(out). The catalysed reaction is K(+)(in) = K(+)(out). Functionally, component of N-methyl-D-aspartate (NMDA) receptors (NMDARs) that function as heterotetrameric, ligand-gated cation channels with high calcium permeability and voltage-dependent block by Mg(2+). Participates in synaptic plasticity for learning and memory formation by contributing to the slow phase of excitatory postsynaptic current and long-term synaptic potentiation. Channel activation requires binding of the neurotransmitter L-glutamate to the GluN2 subunit, glycine or D-serine binding to the GluN1 subunit, plus membrane depolarization to eliminate channel inhibition by Mg(2+). NMDARs mediate simultaneously the potasium efflux and the influx of calcium and sodium. Each GluN2 subunit confers differential attributes to channel properties, including activation, deactivation and desensitization kinetics, pH sensitivity, Ca2(+) permeability, and binding to allosteric modulators. The sequence is that of Glutamate receptor ionotropic, NMDA 2C from Rattus norvegicus (Rat).